The chain runs to 663 residues: MNKKETNTSWWRIILISLGISIICILAAFLAMKDGFFVLENNTKNNNPDSPENKASSKMAYARLLNYIEKGWIKTIDFYENGQIAIVEASSSELSDRPQRLRVEIPAGSTSLIGKLKEANVDINAHPPKLDIFKTISDTLGSLIVPGLVVAVFYLFLERANNNNNNNSNGSPFGPGGGPNQNMRGLGEIKKEIQKEPDTGITFKDIAGIEEVKEEFEEIVTFLKDPSRFTAVGATIPKGVLLVGPPGTGKTLLAKAIAGEAKVPFINISGSEFVEMFVGVGAARVRNLFEKAKQDTPCIIFIDEIDAVGRQRGAGVGGGNDEREQTLNQLLTEMDGFEKNKGIVVIAATNRADILDNALLRPGRFDRQVTVNPPDRAGRVAILAVHARNKKLSPAISLETIAQRTTGFGGAELANLLNEAAIISAREEKAEIGSKEISLAIERVIAGLEGPSIADNKNKRLVAYHEAGHAMVGTLLRNHDNVQNVTLVPRGQARGLTWFMPNEDPSLVTRGQIVARIVGALGGRAAEQSVFGSTEITTGASGDLAQVTDLAKQMILRFGMSGIGPVSLSKPGGSFLFVGRGVRPSNEYSEALAIKIDEQIRTITELCYNEAVEIMDLNRISLDLAVTGLIQDEVLTGVSFEKVVADFSKLPTNKIYESKFPKK.

Residues 1 to 12 (MNKKETNTSWWR) lie on the Stromal side of the membrane. A helical membrane pass occupies residues 13-33 (IILISLGISIICILAAFLAMK). The Lumenal segment spans residues 34 to 135 (DGFFVLENNT…HPPKLDIFKT (102 aa)). The helical transmembrane segment at 136 to 156 (ISDTLGSLIVPGLVVAVFYLF) threads the bilayer. Residues 157-663 (LERANNNNNN…KIYESKFPKK (507 aa)) are Stromal-facing. The disordered stretch occupies residues 165–184 (NNNSNGSPFGPGGGPNQNMR). 244–251 (GPPGTGKT) contacts ATP. His465 is a Zn(2+) binding site. The active site involves Glu466. Zn(2+)-binding residues include His469 and Asp543.

The protein in the central section; belongs to the AAA ATPase family. This sequence in the C-terminal section; belongs to the peptidase M41 family. Homohexamer. It depends on Zn(2+) as a cofactor.

Its subcellular location is the plastid. It is found in the chloroplast thylakoid membrane. In terms of biological role, acts as a processive, ATP-dependent zinc metallopeptidase. The protein is ATP-dependent zinc metalloprotease FtsH of Heterosigma akashiwo (strain NIES-293 / 8280G21-1).